The sequence spans 37 residues: uncharacterized protein (37 aa).

Residues 1 to 23 (MLNFSLCLYPVFILNKLVLRTQS) form the signal peptide.

The protein belongs to the orthopoxviruses VACWR204.5 protein family.

This is an uncharacterized protein from Vaccinia virus (strain Western Reserve) (VACV).